Consider the following 152-residue polypeptide: Snaclec anticoagulant protein subunit A (152 aa).

Positions 1-23 are cleaved as a signal peptide; it reads MGRFIFVSFGLLVVYLSLSGTAA. Residues 24–152 enclose the C-type lectin domain; that stretch reads DCSSSWSSYE…EQRDPFVCEA (129 aa). Intrachain disulfides connect C25-C36, C53-C150, and C125-C142. Residues S64, E66, and E70 each coordinate Ca(2+). E151 is a binding site for Ca(2+).

This sequence belongs to the snaclec family. As to quaternary structure, heterodimer of subunits A and B; disulfide-linked. In terms of tissue distribution, expressed by the venom gland.

It localises to the secreted. Functionally, anticoagulant protein which binds to the gamma-carboxyglutamic acid-domain regions of factors IX and factor X in the presence of calcium with a 1 to 1 stoichiometry. Also inhibits platelet aggregation by binding to platelet glycoprotein Ibalpha (GP1BA) and functioning as a blocker of vWF. Is devoid of hemorrhagic and lethal activities. Possesses antithrombotic and thrombolytic activities. Also hydrolyzes the Aalpha-chain of fibrinogen. Does not affect the Bbeta-chain and the gamma chain. In Deinagkistrodon acutus (Hundred-pace snake), this protein is Snaclec anticoagulant protein subunit A.